A 339-amino-acid chain; its full sequence is Mitogen-activated protein kinase kinase kinase 18 (339 aa).

Positions 3-263 (WTRGKTLGRG…ASQLLNHPFL (261 aa)) constitute a Protein kinase domain. ATP contacts are provided by residues 9–17 (LGRGSTATV) and K32. D131 acts as the Proton acceptor in catalysis. Residue S301 is modified to Phosphoserine.

This sequence belongs to the protein kinase superfamily. Ser/Thr protein kinase family. Interacts with ABI1. Binds to MKK3. Associates with SRK2E within the nucleus. Post-translationally, autophosphorylated. In terms of processing, unstable protein degraded by the proteasome pathway; this degradation is promoted by ABI1, but blocked by ABA. In terms of tissue distribution, expressed in roots, leaves and flowers.

The protein localises to the nucleus. The enzyme catalyses L-seryl-[protein] + ATP = O-phospho-L-seryl-[protein] + ADP + H(+). The catalysed reaction is L-threonyl-[protein] + ATP = O-phospho-L-threonyl-[protein] + ADP + H(+). Kinase activity is activated by abscisic acid (ABA). Inhibited by ABI1. Activated by SRK2E. In terms of biological role, component of the abscisic acid (ABA) signaling pathway that acts as ABA signal transducer in the context of abiotic stresses. Triggers MPK1, MPK2, MPK7 and MPK14 activation in a MKK3-dependent manner and MPK6 activation in a MKK3-independent manner. Mediates the ABA-dependent activation of the MKK3-MPK7 module. Positive regulator of ABA responses leading to the induction of gene expression (e.g. RD29B and RAB18) and involved in various responses including stomatal development, stomatal movement, inhibition of germination and root growth. Promotes leaf senescence. This is Mitogen-activated protein kinase kinase kinase 18 from Arabidopsis thaliana (Mouse-ear cress).